Reading from the N-terminus, the 228-residue chain is Ribonuclease 3 (228 aa).

Residues 3 to 132 (IRPLEEHLGI…FLGALYLDQG (130 aa)) form the RNase III domain. Residue Glu-45 participates in Mg(2+) binding. The active site involves Asp-49. Residues Asp-118 and Glu-121 each coordinate Mg(2+). Glu-121 is a catalytic residue. Residues 158–227 (DYKSQLQEFV…AKNALDSINN (70 aa)) form the DRBM domain. Positions 205-228 (GTGRTKKEAEQRAAKNALDSINNS) are disordered.

The protein belongs to the ribonuclease III family. In terms of assembly, homodimer. Mg(2+) is required as a cofactor.

It is found in the cytoplasm. It catalyses the reaction Endonucleolytic cleavage to 5'-phosphomonoester.. Functionally, digests double-stranded RNA. Involved in the processing of primary rRNA transcript to yield the immediate precursors to the large and small rRNAs (23S and 16S). Processes some mRNAs, and tRNAs when they are encoded in the rRNA operon. Processes pre-crRNA and tracrRNA of type II CRISPR loci if present in the organism. This Oceanobacillus iheyensis (strain DSM 14371 / CIP 107618 / JCM 11309 / KCTC 3954 / HTE831) protein is Ribonuclease 3.